A 281-amino-acid polypeptide reads, in one-letter code: Imidazole glycerol phosphate synthase subunit HisF (281 aa).

Residues D12 and D131 contribute to the active site. The segment at V256–G281 is disordered.

Belongs to the HisA/HisF family. As to quaternary structure, heterodimer of HisH and HisF.

It is found in the cytoplasm. It carries out the reaction 5-[(5-phospho-1-deoxy-D-ribulos-1-ylimino)methylamino]-1-(5-phospho-beta-D-ribosyl)imidazole-4-carboxamide + L-glutamine = D-erythro-1-(imidazol-4-yl)glycerol 3-phosphate + 5-amino-1-(5-phospho-beta-D-ribosyl)imidazole-4-carboxamide + L-glutamate + H(+). The protein operates within amino-acid biosynthesis; L-histidine biosynthesis; L-histidine from 5-phospho-alpha-D-ribose 1-diphosphate: step 5/9. Functionally, IGPS catalyzes the conversion of PRFAR and glutamine to IGP, AICAR and glutamate. The HisF subunit catalyzes the cyclization activity that produces IGP and AICAR from PRFAR using the ammonia provided by the HisH subunit. The polypeptide is Imidazole glycerol phosphate synthase subunit HisF (Thermosynechococcus vestitus (strain NIES-2133 / IAM M-273 / BP-1)).